Reading from the N-terminus, the 374-residue chain is DNA replication and repair protein RecF (374 aa).

34–41 (GNNGSGKT) is an ATP binding site.

Belongs to the RecF family.

The protein localises to the cytoplasm. The RecF protein is involved in DNA metabolism; it is required for DNA replication and normal SOS inducibility. RecF binds preferentially to single-stranded, linear DNA. It also seems to bind ATP. This chain is DNA replication and repair protein RecF, found in Allorhizobium ampelinum (strain ATCC BAA-846 / DSM 112012 / S4) (Agrobacterium vitis (strain S4)).